Consider the following 352-residue polypeptide: Protein-glutamate methylesterase/protein-glutamine glutaminase 1 (352 aa).

Positions 5–122 (KVLVVDDSAF…SLDVLSVKEE (118 aa)) constitute a Response regulatory domain. A 4-aspartylphosphate modification is found at Asp56. The CheB-type methylesterase domain maps to 155-352 (PDQDRKLNKL…EITEEVLSML (198 aa)). Residues Ser170, His197, and Asp297 contribute to the active site.

This sequence belongs to the CheB family. Phosphorylated by CheA. Phosphorylation of the N-terminal regulatory domain activates the methylesterase activity.

It localises to the cytoplasm. It catalyses the reaction [protein]-L-glutamate 5-O-methyl ester + H2O = L-glutamyl-[protein] + methanol + H(+). The enzyme catalyses L-glutaminyl-[protein] + H2O = L-glutamyl-[protein] + NH4(+). Its function is as follows. Involved in chemotaxis. Part of a chemotaxis signal transduction system that modulates chemotaxis in response to various stimuli. Catalyzes the demethylation of specific methylglutamate residues introduced into the chemoreceptors (methyl-accepting chemotaxis proteins or MCP) by CheR. Also mediates the irreversible deamidation of specific glutamine residues to glutamic acid. The sequence is that of Protein-glutamate methylesterase/protein-glutamine glutaminase 1 from Syntrophomonas wolfei subsp. wolfei (strain DSM 2245B / Goettingen).